Reading from the N-terminus, the 387-residue chain is MKIHIVQKGDSLWKIAEKYGVDVEEVKKLNTQLSNPDLIMPGMKIKVPSEGVPVRKEPKAGKSPAAGSVKQEHPYAKEKPKSVVDVEDTKPKEKKSMPYVPPMPNLQENVYPEADVNDYYDMKQLFQPWSPPKPEEPKKHHDGNMDHMYHMQDQFPQQEAMSNMENANYPNMPNMPKAPEVGGIEEENVHHTVPNMPMPAVQPYYHYPAHFVPCPVPVSPILPGSGLCYPYYPAQAYPMHPMHGYQPGFVSPQYDPGYENQHHENSHHGHYGSYGAPQYASPAYGSPYGHMPYGPYYGTPQVMGAYQPAAAHGYMPYKDHDDCGCDGDHQPYFSAPGHSGMGAYGSPNMPYGTANPNPNPYSAGVSMPMTNQPSVNQMFGRPEEENE.

The LysM domain occupies 2–47 (KIHIVQKGDSLWKIAEKYGVDVEEVKKLNTQLSNPDLIMPGMKIKV). 2 disordered regions span residues 49-106 (SEGV…MPNL) and 355-387 (NPNP…EENE). A compositionally biased stretch (basic and acidic residues) spans 70–96 (KQEHPYAKEKPKSVVDVEDTKPKEKKS). A compositionally biased stretch (polar residues) spans 368–377 (PMTNQPSVNQ).

It is found in the spore cortex. In terms of biological role, probably involved in the assembly of some coat protein components implicated in both lysozyme resistance and germination. Could be required for the assembly of CotG. Associates with SpoIVD during the early stage of coat assembly. The chain is SpoIVD-associated factor A (safA) from Bacillus subtilis (strain 168).